The chain runs to 135 residues: UPF0306 protein C8J_1355 (135 aa).

It belongs to the UPF0306 family.

The sequence is that of UPF0306 protein C8J_1355 from Campylobacter jejuni subsp. jejuni serotype O:6 (strain 81116 / NCTC 11828).